A 202-amino-acid polypeptide reads, in one-letter code: MIGYLRGRLHLVTPEGILLETGGIGWLVRTVTNRSWPAPGTEIAVYTQLVVREDAMELYGFTRPEELHLFTLLRGVNGIGPRGALQILGAAKPEQLSRAIAAGDSAFLTALPGIGAKKAQRLLLELKDAVLKSGLVDGTETEAIPAGGGDNDEALAALLALGYSREEIGPILARVRQELGNAAPTTAVLQAVLKTFGRGGGD.

The segment at 1–62 (MIGYLRGRLH…EDAMELYGFT (62 aa)) is domain I. Residues 63–141 (RPEELHLFTL…KSGLVDGTET (79 aa)) are domain II. A flexible linker region spans residues 141–145 (TEAIP). Residues 146 to 202 (AGGGDNDEALAALLALGYSREEIGPILARVRQELGNAAPTTAVLQAVLKTFGRGGGD) form a domain III region.

It belongs to the RuvA family. As to quaternary structure, homotetramer. Forms an RuvA(8)-RuvB(12)-Holliday junction (HJ) complex. HJ DNA is sandwiched between 2 RuvA tetramers; dsDNA enters through RuvA and exits via RuvB. An RuvB hexamer assembles on each DNA strand where it exits the tetramer. Each RuvB hexamer is contacted by two RuvA subunits (via domain III) on 2 adjacent RuvB subunits; this complex drives branch migration. In the full resolvosome a probable DNA-RuvA(4)-RuvB(12)-RuvC(2) complex forms which resolves the HJ.

The protein resides in the cytoplasm. In terms of biological role, the RuvA-RuvB-RuvC complex processes Holliday junction (HJ) DNA during genetic recombination and DNA repair, while the RuvA-RuvB complex plays an important role in the rescue of blocked DNA replication forks via replication fork reversal (RFR). RuvA specifically binds to HJ cruciform DNA, conferring on it an open structure. The RuvB hexamer acts as an ATP-dependent pump, pulling dsDNA into and through the RuvAB complex. HJ branch migration allows RuvC to scan DNA until it finds its consensus sequence, where it cleaves and resolves the cruciform DNA. The chain is Holliday junction branch migration complex subunit RuvA from Moorella thermoacetica (strain ATCC 39073 / JCM 9320).